We begin with the raw amino-acid sequence, 293 residues long: Phosphoribosylaminoimidazole-succinocarboxamide synthase (293 aa).

It belongs to the SAICAR synthetase family.

It catalyses the reaction 5-amino-1-(5-phospho-D-ribosyl)imidazole-4-carboxylate + L-aspartate + ATP = (2S)-2-[5-amino-1-(5-phospho-beta-D-ribosyl)imidazole-4-carboxamido]succinate + ADP + phosphate + 2 H(+). It functions in the pathway purine metabolism; IMP biosynthesis via de novo pathway; 5-amino-1-(5-phospho-D-ribosyl)imidazole-4-carboxamide from 5-amino-1-(5-phospho-D-ribosyl)imidazole-4-carboxylate: step 1/2. In Bordetella parapertussis (strain 12822 / ATCC BAA-587 / NCTC 13253), this protein is Phosphoribosylaminoimidazole-succinocarboxamide synthase.